A 717-amino-acid chain; its full sequence is Methionine--tRNA ligase (717 aa).

The short motif at 19–29 is the 'HIGH' region element; that stretch reads PYANGDLHVGH. Residues C150, C153, C162, and C166 each coordinate Zn(2+). The 'KMSKS' region motif lies at 356-360; the sequence is ALSTS. T359 provides a ligand contact to ATP. The segment at 573–603 is disordered; the sequence is ERVEEASEASAEASNEGGEAAGDEVDDGDVD. Low complexity predominate over residues 580–590; it reads EASAEASNEGG. Acidic residues predominate over residues 593 to 603; sequence AGDEVDDGDVD. The 99-residue stretch at 619 to 717 folds into the tRNA-binding domain; sequence DFEGVDMRVG…EDAPLGTRIK (99 aa).

This sequence belongs to the class-I aminoacyl-tRNA synthetase family. MetG type 1 subfamily. Homodimer. The cofactor is Zn(2+).

It is found in the cytoplasm. It carries out the reaction tRNA(Met) + L-methionine + ATP = L-methionyl-tRNA(Met) + AMP + diphosphate. Its function is as follows. Is required not only for elongation of protein synthesis but also for the initiation of all mRNA translation through initiator tRNA(fMet) aminoacylation. This chain is Methionine--tRNA ligase, found in Haloarcula marismortui (strain ATCC 43049 / DSM 3752 / JCM 8966 / VKM B-1809) (Halobacterium marismortui).